Here is a 144-residue protein sequence, read N- to C-terminus: NADH dehydrogenase [ubiquinone] 1 alpha subcomplex subunit 13 (144 aa).

The helical transmembrane segment at 30–51 threads the bilayer; that stretch reads LSGYSMLALGIGTLIYGHWSMM.

This sequence belongs to the complex I NDUFA13 subunit family. As to quaternary structure, complex I is composed of 45 different subunits. Interacts with CARD15, but not with CARD4. Interacts with STAT3, but not with STAT1, STAT2 and STAT5A. Interacts with OLFM4.

The protein resides in the mitochondrion inner membrane. The protein localises to the nucleus. Accessory subunit of the mitochondrial membrane respiratory chain NADH dehydrogenase (Complex I), that is believed not to be involved in catalysis. Complex I functions in the transfer of electrons from NADH to the respiratory chain. The immediate electron acceptor for the enzyme is believed to be ubiquinone. Involved in the interferon/all-trans-retinoic acid (IFN/RA) induced cell death. This apoptotic activity is inhibited by interaction with viral IRF1. Prevents the transactivation of STAT3 target genes. May play a role in CARD15-mediated innate mucosal responses and serve to regulate intestinal epithelial cell responses to microbes. The chain is NADH dehydrogenase [ubiquinone] 1 alpha subcomplex subunit 13 (NDUFA13) from Pongo pygmaeus (Bornean orangutan).